A 259-amino-acid polypeptide reads, in one-letter code: Ras-related protein Rab-34 (259 aa).

Met-1 is modified (N-acetylmethionine). GTP contacts are provided by Ser-62, Val-63, Gly-64, Lys-65, Thr-66, Asp-78, Tyr-81, and Thr-84. A Mg(2+)-binding site is contributed by Thr-66. Positions 71–89 (RFCKDTFDKNYKATIGVDF) match the Switch 1 motif. Mg(2+)-binding residues include Thr-84 and Asp-107. Positions 108-127 (TAGQERFKCIASTYYRGAQA) match the Switch 2 motif. Residues Gly-110, Lys-167, Asp-169, and Ser-198 each contribute to the GTP site. 2 positions are modified to phosphoserine: Ser-241 and Ser-244. Residues Cys-257 and Cys-258 are each lipidated (S-geranylgeranyl cysteine).

It belongs to the small GTPase superfamily. Rab family. As to quaternary structure, interacts with RILP. The GTP-bound form interacts with REP15. The cofactor is Mg(2+).

It localises to the cytoplasm. It is found in the golgi apparatus. The protein resides in the cytoplasmic vesicle. The protein localises to the phagosome. Its subcellular location is the phagosome membrane. It localises to the cell projection. It is found in the cilium. The protein resides in the cytoskeleton. The protein localises to the microtubule organizing center. Its subcellular location is the centrosome. It localises to the centriole. It catalyses the reaction GTP + H2O = GDP + phosphate + H(+). With respect to regulation, regulated by guanine nucleotide exchange factors (GEFs) which promote the exchange of bound GDP for free GTP. Regulated by GTPase activating proteins (GAPs) which increase the GTP hydrolysis activity. Inhibited by GDP dissociation inhibitors (GDIs). Functionally, the small GTPases Rab are key regulators of intracellular membrane trafficking, from the formation of transport vesicles to their fusion with membranes. Rabs cycle between an inactive GDP-bound form and an active GTP-bound form that is able to recruit to membranes different sets of downstream effectors directly responsible for vesicle formation, movement, tethering and fusion. RAB34 transports protein involved in the redistribution of lysosomes to the peri-Golgi region. Plays a role in the maturation of phagosomes that engulf pathogens, such as S.aureus and M.tuberculosis. Plays a role in the fusion of phagosomes with lysosomes. Required for the early steps of intracellular ciliogenesis, the cilium assembly pathway initiated by trafficking and docking of ciliary vesicles to the centrioles in the cytoplasm, followed by axoneme formation in the cytoplasm. After axoneme elongation, the centrioles migrate close to the cell surface so that ciliary vesicles can fuse with the plasma membrane to expose cilia to the extracellular space. It seems dispensable for ciliogenesis via the extracellular pathway where cilium assembly begins after migration and docking of the centriole to the plasma membrane. Also acts as a positive regulator of hedgehog signaling and regulates ciliary function. In Sus scrofa (Pig), this protein is Ras-related protein Rab-34 (RAB34).